The chain runs to 290 residues: 33 kDa chaperonin (290 aa).

Cystine bridges form between cysteine 235–cysteine 237 and cysteine 268–cysteine 271.

Belongs to the HSP33 family. In terms of processing, under oxidizing conditions two disulfide bonds are formed involving the reactive cysteines. Under reducing conditions zinc is bound to the reactive cysteines and the protein is inactive.

It is found in the cytoplasm. In terms of biological role, redox regulated molecular chaperone. Protects both thermally unfolding and oxidatively damaged proteins from irreversible aggregation. Plays an important role in the bacterial defense system toward oxidative stress. This is 33 kDa chaperonin from Streptococcus equi subsp. zooepidemicus (strain H70).